The chain runs to 417 residues: Phosphoglycerate kinase (417 aa).

Substrate is bound by residues Asp24 to Asn26, Arg44, His67 to Arg70, Arg126, and Arg170. Residues Lys220, Gly316, Glu347, and Gly373–Ser376 contribute to the ATP site.

Belongs to the phosphoglycerate kinase family. As to quaternary structure, monomer.

The protein resides in the cytoplasm. It carries out the reaction (2R)-3-phosphoglycerate + ATP = (2R)-3-phospho-glyceroyl phosphate + ADP. Its pathway is carbohydrate degradation; glycolysis; pyruvate from D-glyceraldehyde 3-phosphate: step 2/5. This Renibacterium salmoninarum (strain ATCC 33209 / DSM 20767 / JCM 11484 / NBRC 15589 / NCIMB 2235) protein is Phosphoglycerate kinase.